The sequence spans 107 residues: MTAFAYIGAALAEIAGCFAFWAWLRMDKSVWWVVPGIASLALFAYLLTLVEADHAGRTYAAYGGVYIAAALLWLWAVEGAKPDRWDLIGAAVCLGGAAIILFGPRGG.

A run of 4 helical transmembrane segments spans residues 4-24, 30-50, 60-80, and 87-107; these read FAYI…WAWL, VWWV…LTLV, AAYG…VEGA, and LIGA…PRGG.

Belongs to the UPF0060 family.

The protein localises to the cell inner membrane. This is UPF0060 membrane protein Sala_0701 from Sphingopyxis alaskensis (strain DSM 13593 / LMG 18877 / RB2256) (Sphingomonas alaskensis).